The chain runs to 215 residues: Pyrrolidone-carboxylate peptidase (215 aa).

Catalysis depends on residues Glu80, Cys143, and His167.

It belongs to the peptidase C15 family. In terms of assembly, homotetramer.

The protein localises to the cytoplasm. It carries out the reaction Release of an N-terminal pyroglutamyl group from a polypeptide, the second amino acid generally not being Pro.. Removes 5-oxoproline from various penultimate amino acid residues except L-proline. This is Pyrrolidone-carboxylate peptidase from Bacillus cereus (strain 03BB102).